A 145-amino-acid chain; its full sequence is MVRERTKKLRGGHYGRGMKAGRGKGKKGGRGNAGMGKHKWIWMVKYDPLHFGGKGFTSHHLSTPDVPINLGELENIFENLKADGFVREENGETVVDLKAAGYDKLLGSGNFSVKSRIIIDKATEKAISKLSAIGSKIENVGNTAE.

2 stretches are compositionally biased toward basic residues: residues 1 to 13 (MVRE…RGGH) and 19 to 29 (KAGRGKGKKGG). A disordered region spans residues 1 to 33 (MVRERTKKLRGGHYGRGMKAGRGKGKKGGRGNA).

It belongs to the universal ribosomal protein uL15 family. In terms of assembly, part of the 50S ribosomal subunit.

Functionally, binds to the 23S rRNA. This chain is Large ribosomal subunit protein uL15, found in Thermoplasma volcanium (strain ATCC 51530 / DSM 4299 / JCM 9571 / NBRC 15438 / GSS1).